The following is a 416-amino-acid chain: MFSSQDTLAKVDPELWSAIQAENRRQEDHIELIASENYVSHAVMEAQGSQLTNKYAEGYPGKRYYGGCEHVDVVEQLAIDRLKKLFGADAANVQPNSGSQANQAVLMAFAKPGDTIMGMSLAEGGHLTHGMPLNMSGKWFNVVAYGLDEKEEINYAAMEALAREHKPKIIIAGASAYALRIDFERFARIAREVGAIFWVDMAHYAGLIAAGYYPNPVPHADVVTSTTHKTLRGPRGGIILMKAEHEKAINSAIFPGLQGGPLEHVIAAKAVAFKEAATPAFRDYQEQVIANARVMARVLGEERGLRIVSGRTESHVFLVDLRSKNITGKEAEAVLGSAHITVNKNSIPNDPQKPFVTSGIRIGSPAMTTRGFTEIEAEQIAHLIADVLDAPQDAAVLERVRGKVGELCAKFPVYGS.

Residues L121 and 125-127 (GHL) each bind (6S)-5,6,7,8-tetrahydrofolate. K229 carries the post-translational modification N6-(pyridoxal phosphate)lysine.

It belongs to the SHMT family. In terms of assembly, homodimer. Pyridoxal 5'-phosphate serves as cofactor.

It is found in the cytoplasm. The enzyme catalyses (6R)-5,10-methylene-5,6,7,8-tetrahydrofolate + glycine + H2O = (6S)-5,6,7,8-tetrahydrofolate + L-serine. Its pathway is one-carbon metabolism; tetrahydrofolate interconversion. It functions in the pathway amino-acid biosynthesis; glycine biosynthesis; glycine from L-serine: step 1/1. Catalyzes the reversible interconversion of serine and glycine with tetrahydrofolate (THF) serving as the one-carbon carrier. This reaction serves as the major source of one-carbon groups required for the biosynthesis of purines, thymidylate, methionine, and other important biomolecules. Also exhibits THF-independent aldolase activity toward beta-hydroxyamino acids, producing glycine and aldehydes, via a retro-aldol mechanism. The polypeptide is Serine hydroxymethyltransferase (Azoarcus sp. (strain BH72)).